The chain runs to 377 residues: Cytochrome b (377 aa).

The next 4 helical transmembrane spans lie at 34 to 54, 78 to 100, 113 to 133, and 179 to 199; these read FGFLLGMCLSIQIFTGLFLSM, WLLRVLHANGGSMFFICLYIHIA, TWMTGVVLLILVMATAFLGYV, and FFTLHFILPFVVLAMVAIHLL. His84 and His98 together coordinate heme b. Heme b contacts are provided by His183 and His197. An a ubiquinone-binding site is contributed by His202. Helical transmembrane passes span 225-245, 288-308, 323-343, and 352-372; these read FTIKDLFGVVVMVWLLMILVL, KLGGVVALLASVVILIILPLY, MLFWGFISIFILLTWIGAQAI, and QILTSLYFFYFILSPLLSVLW.

Belongs to the cytochrome b family. As to quaternary structure, the main subunits of complex b-c1 are: cytochrome b, cytochrome c1 and the Rieske protein. Heme b serves as cofactor.

It is found in the mitochondrion inner membrane. Its function is as follows. Component of the ubiquinol-cytochrome c reductase complex (complex III or cytochrome b-c1 complex) that is part of the mitochondrial respiratory chain. The b-c1 complex mediates electron transfer from ubiquinol to cytochrome c. Contributes to the generation of a proton gradient across the mitochondrial membrane that is then used for ATP synthesis. This Priapulus caudatus (Priapulid worm) protein is Cytochrome b (mt:Cyt-b).